The sequence spans 685 residues: Amino acid transporter heavy chain SLC3A1 (685 aa).

Residues 1–11 (MAEDKSKRDSI) show a composition bias toward basic and acidic residues. Residues 1–56 (MAEDKSKRDSIEMSMKGCQTNNGFVHNEDILEQTPDPGSSTDNLKHSTRGILGSQE) form a disordered region. The Cytoplasmic portion of the chain corresponds to 1–87 (MAEDKSKRDS…GQARYRIPRE (87 aa)). Ser10 is subject to Phosphoserine. The chain crosses the membrane as a helical; Signal-anchor for type II membrane protein span at residues 88–108 (ILFWLTVASVLVLIAATIAII). Residues 109 to 685 (ALSPKCLDWW…SVLNILYTSC (577 aa)) lie on the Extracellular side of the membrane. Residue Asn214 coordinates Ca(2+). Asn214 and Asn261 each carry an N-linked (GlcNAc...) asparagine glycan. The cysteines at positions 242 and 273 are disulfide-linked. Ca(2+) contacts are provided by Asp284, Phe318, Leu319, and Glu321. Asn332, Asn495, Asn513, and Asn575 each carry an N-linked (GlcNAc...) asparagine glycan. Disulfide bonds link Cys571–Cys666 and Cys673–Cys685.

As to quaternary structure, disulfide-linked heterodimer composed of the catalytic light subunit SLC7A9 and the heavy subunit SLC3A1. The heterodimer is the minimal functional unit. Assembles in non-covalently linked heterotetramers (dimers of heterodimers) and higher order oligomers; the oligomerization is mediated by SLC3A1 likely to prevent degradation in the endoplasmic reticulum and facilitate heteromer trafficking to the plasma membrane. Disulfide-linked heterodimer composed of the catalytic light subunit SLC7A13 and the heavy subunit SLC3A1. In terms of tissue distribution, expressed in the brush border membrane in the kidney (at protein level). Predominantly expressed in the kidney, small intestine and pancreas. Weakly expressed in liver.

Its subcellular location is the cell membrane. It localises to the apical cell membrane. Acts as a chaperone that facilitates biogenesis and trafficking of functional transporter heteromers to the plasma membrane. Associates with SLC7A9 to form a functional transporter complex that mediates the electrogenic exchange between cationic amino acids and neutral amino acids, with a stoichiometry of 1:1. SLC7A9-SLC3A1 transporter has system b(0,+)-like activity with high affinity for extracellular cationic amino acids and L-cystine and lower affinity for intracellular neutral amino acids. Substrate exchange is driven by high concentration of intracellular neutral amino acids and the intracellular reduction of L-cystine to L-cysteine. SLC7A9-SLC3A1 acts as a major transporter for reabsorption of L-cystine and dibasic amino acids across the brush border membrane in early proximal tubules. Associates with SLC7A13 to form a functional complex that transports anionic and neutral amino acids via exchange or facilitated diffusion. SLC7A13-SLC3A1 may act as a major transporter for L-cystine in late proximal tubules, ensuring its reabsorption from the luminal fluid in exchange for cytosolic L-glutamate or L-aspartate. This chain is Amino acid transporter heavy chain SLC3A1, found in Homo sapiens (Human).